The sequence spans 94 residues: Large ribosomal subunit protein bL31 (94 aa).

The segment at 65-94 (YGMADSENDSTDKKKTTNEKKVSDSPSKES) is disordered. Residues 74–94 (STDKKKTTNEKKVSDSPSKES) are compositionally biased toward basic and acidic residues.

Belongs to the bacterial ribosomal protein bL31 family. Type A subfamily. As to quaternary structure, part of the 50S ribosomal subunit.

In terms of biological role, binds the 23S rRNA. This Prochlorococcus marinus (strain MIT 9211) protein is Large ribosomal subunit protein bL31.